The chain runs to 441 residues: Ribulose bisphosphate carboxylase large chain (441 aa).

Lys4 carries the N6,N6,N6-trimethyllysine modification. Substrate-binding residues include Asn113 and Thr163. The active-site Proton acceptor is Lys165. Position 167 (Lys167) interacts with substrate. The Mg(2+) site is built by Lys191, Asp193, and Glu194. At Lys191 the chain carries N6-carboxylysine. Catalysis depends on His284, which acts as the Proton acceptor. Substrate contacts are provided by Arg285, His317, and Ser369.

Belongs to the RuBisCO large chain family. Type I subfamily. As to quaternary structure, heterohexadecamer of 8 large chains and 8 small chains; disulfide-linked. The disulfide link is formed within the large subunit homodimers. The cofactor is Mg(2+). The disulfide bond which can form in the large chain dimeric partners within the hexadecamer appears to be associated with oxidative stress and protein turnover.

Its subcellular location is the plastid. The protein localises to the chloroplast. It carries out the reaction 2 (2R)-3-phosphoglycerate + 2 H(+) = D-ribulose 1,5-bisphosphate + CO2 + H2O. The catalysed reaction is D-ribulose 1,5-bisphosphate + O2 = 2-phosphoglycolate + (2R)-3-phosphoglycerate + 2 H(+). In terms of biological role, ruBisCO catalyzes two reactions: the carboxylation of D-ribulose 1,5-bisphosphate, the primary event in carbon dioxide fixation, as well as the oxidative fragmentation of the pentose substrate in the photorespiration process. Both reactions occur simultaneously and in competition at the same active site. This Heliamphora nutans (Venezuelan marsh pitcher plant) protein is Ribulose bisphosphate carboxylase large chain.